The sequence spans 164 residues: Interferon gamma (164 aa).

The first 19 residues, methionine 1–glycine 19, serve as a signal peptide directing secretion. N-linked (GlcNAc...) asparagine glycosylation is found at asparagine 42 and asparagine 61.

Belongs to the type II (or gamma) interferon family. In terms of assembly, homodimer.

The protein resides in the secreted. Its function is as follows. Produced by lymphocytes activated by specific antigens or mitogens. IFN-gamma, in addition to having antiviral activity, has important immunoregulatory functions. It is a potent activator of macrophages, it has antiproliferative effects on transformed cells and it can potentiate the antiviral and antitumor effects of the type I interferons. The sequence is that of Interferon gamma (IFNG) from Meleagris gallopavo (Wild turkey).